The sequence spans 646 residues: Threonine--tRNA ligase (646 aa).

Residues 1–61 (MIKITFPDGS…NEDANFVLYK (61 aa)) form the TGS domain. Positions 242–541 (DHRKIGKEMD…LIEHTAGKFP (300 aa)) are catalytic. Residues Cys337, His388, and His518 each coordinate Zn(2+).

The protein belongs to the class-II aminoacyl-tRNA synthetase family. As to quaternary structure, homodimer. Requires Zn(2+) as cofactor.

The protein localises to the cytoplasm. The catalysed reaction is tRNA(Thr) + L-threonine + ATP = L-threonyl-tRNA(Thr) + AMP + diphosphate + H(+). In terms of biological role, catalyzes the attachment of threonine to tRNA(Thr) in a two-step reaction: L-threonine is first activated by ATP to form Thr-AMP and then transferred to the acceptor end of tRNA(Thr). Also edits incorrectly charged L-seryl-tRNA(Thr). In Phocaeicola vulgatus (strain ATCC 8482 / DSM 1447 / JCM 5826 / CCUG 4940 / NBRC 14291 / NCTC 11154) (Bacteroides vulgatus), this protein is Threonine--tRNA ligase.